Consider the following 310-residue polypeptide: GMP synthase [glutamine-hydrolyzing] subunit B (310 aa).

Positions 2-185 (FKTEPFIEES…LGLPDQIAHR (184 aa)) constitute a GMPS ATP-PPase domain. 29-35 (SGGVDSA) serves as a coordination point for ATP.

In terms of assembly, heterodimer composed of a glutamine amidotransferase subunit (A) and a GMP-binding subunit (B).

It catalyses the reaction XMP + L-glutamine + ATP + H2O = GMP + L-glutamate + AMP + diphosphate + 2 H(+). The protein operates within purine metabolism; GMP biosynthesis; GMP from XMP (L-Gln route): step 1/1. Functionally, catalyzes the synthesis of GMP from XMP. The chain is GMP synthase [glutamine-hydrolyzing] subunit B from Methanococcus maripaludis (strain DSM 14266 / JCM 13030 / NBRC 101832 / S2 / LL).